Reading from the N-terminus, the 115-residue chain is Na(+)/H(+) antiporter subunit C1 (115 aa).

The next 3 membrane-spanning stretches (helical) occupy residues 1–21, 28–48, and 72–92; these read MEIL…YLIL, IIIG…TMGG, and LILT…VLAF.

It belongs to the CPA3 antiporters (TC 2.A.63) subunit C family. May form a heterooligomeric complex that consists of seven subunits: mnhA1, mnhB1, mnhC1, mnhD1, mnhE1, mnhF1 and mnhG1.

The protein resides in the cell membrane. Functionally, mnh complex is a Na(+)/H(+) antiporter involved in Na(+) excretion. In Staphylococcus saprophyticus subsp. saprophyticus (strain ATCC 15305 / DSM 20229 / NCIMB 8711 / NCTC 7292 / S-41), this protein is Na(+)/H(+) antiporter subunit C1 (mnhC1).